A 202-amino-acid chain; its full sequence is Cold-regulated 413 plasma membrane protein 4 (202 aa).

Residues M1–G42 lie on the Extracellular side of the membrane. A helical membrane pass occupies residues V43–I63. Topologically, residues L64–K72 are cytoplasmic. Residues M73–F93 form a helical membrane-spanning segment. The Extracellular portion of the chain corresponds to F94–D97. The chain crosses the membrane as a helical span at residues F98 to P118. Position 119 (E119) is a topological domain, cytoplasmic. A helical transmembrane segment spans residues W120–W140. Residues T141–S145 lie on the Extracellular side of the membrane. Residues W146–A166 traverse the membrane as a helical segment. The Cytoplasmic portion of the chain corresponds to S167–S181. The chain crosses the membrane as a helical span at residues N182–F202.

This sequence belongs to the Cold-regulated 413 protein family.

It localises to the cell membrane. In Arabidopsis thaliana (Mouse-ear cress), this protein is Cold-regulated 413 plasma membrane protein 4.